The sequence spans 180 residues: ATP-dependent protease subunit HslV (180 aa).

Residue threonine 6 is part of the active site. The Na(+) site is built by alanine 164, cysteine 167, and threonine 170.

The protein belongs to the peptidase T1B family. HslV subfamily. A double ring-shaped homohexamer of HslV is capped on each side by a ring-shaped HslU homohexamer. The assembly of the HslU/HslV complex is dependent on binding of ATP.

Its subcellular location is the cytoplasm. It catalyses the reaction ATP-dependent cleavage of peptide bonds with broad specificity.. Its activity is regulated as follows. Allosterically activated by HslU binding. Its function is as follows. Protease subunit of a proteasome-like degradation complex believed to be a general protein degrading machinery. This chain is ATP-dependent protease subunit HslV, found in Borrelia duttonii (strain Ly).